A 291-amino-acid chain; its full sequence is MQENLLEKQFLNHPLYAKIQELKALNLACNFSLGDSVNLSTNSQAKDEILAIAKELKPWRKGPFKIDDLFIDTEWQSFIKFNILKPFMNEISQKCVADIGCNNGYYMFKMLEFNPAKLIGFDPSIKYRLQFELINALAKTPIKYELLGVEDLPSYSLKFDVIFCLGVIYHRSDPIKMLKDLKAGLNKNGVVFLDTMYIEDEREIALVPNKTYSKIPNIYFVPSISALKNWCERAGFKEFEVLATKKTDENEQRKTEWIDSFSLENFLDPKDKNLTIEGYEAPKRVYIRIKI.

Residues Lys61, Trp75, Lys80, Gly100, Asp122 to Ser124, Val149 to Glu150, Tyr169, and Arg284 contribute to the carboxy-S-adenosyl-L-methionine site.

It belongs to the class I-like SAM-binding methyltransferase superfamily. CmoB family. As to quaternary structure, homotetramer.

It carries out the reaction carboxy-S-adenosyl-L-methionine + 5-hydroxyuridine(34) in tRNA = 5-carboxymethoxyuridine(34) in tRNA + S-adenosyl-L-homocysteine + H(+). Functionally, catalyzes carboxymethyl transfer from carboxy-S-adenosyl-L-methionine (Cx-SAM) to 5-hydroxyuridine (ho5U) to form 5-carboxymethoxyuridine (cmo5U) at position 34 in tRNAs. The chain is tRNA U34 carboxymethyltransferase from Campylobacter jejuni subsp. jejuni serotype O:2 (strain ATCC 700819 / NCTC 11168).